Here is a 192-residue protein sequence, read N- to C-terminus: Ion-translocating oxidoreductase complex subunit A (192 aa).

The next 6 membrane-spanning stretches (helical) occupy residues 5 to 25 (FLLF…FLGL), 39 to 59 (VGMS…SYIV), 63 to 83 (ILLP…VIAV), 102 to 122 (LLGI…LALL), 134 to 154 (IIYG…FSSM), and 171 to 191 (SIAM…TGLI).

Belongs to the NqrDE/RnfAE family. In terms of assembly, the complex is composed of six subunits: RnfA, RnfB, RnfC, RnfD, RnfE and RnfG.

It localises to the cell inner membrane. In terms of biological role, part of a membrane-bound complex that couples electron transfer with translocation of ions across the membrane. The protein is Ion-translocating oxidoreductase complex subunit A of Psychromonas ingrahamii (strain DSM 17664 / CCUG 51855 / 37).